The following is a 298-amino-acid chain: 2-dehydro-3-deoxy-D-arabinonate dehydratase (298 aa).

A substrate-binding site is contributed by Ile86. Mg(2+) is bound by residues Glu148, Glu150, and Asp169. 2 residues coordinate substrate: Lys187 and Thr261.

It belongs to the FAH family. Homotetramer. The cofactor is Mg(2+). Ca(2+) serves as cofactor.

It carries out the reaction 2-dehydro-3-deoxy-D-arabinonate = 2,5-dioxopentanoate + H2O. In terms of biological role, participates in a pentose oxidation pathway that converts D-arabinonate to 2-oxoglutarate. This Saccharolobus solfataricus (strain ATCC 35092 / DSM 1617 / JCM 11322 / P2) (Sulfolobus solfataricus) protein is 2-dehydro-3-deoxy-D-arabinonate dehydratase.